A 591-amino-acid polypeptide reads, in one-letter code: Serine/threonine-protein kinase PAK 4 (591 aa).

The CRIB domain occupies 11-24 (ISAPSNFEHRVHTG). The linker stretch occupies residues 25–320 (FDQHEQKFTG…VVDPGDPRSY (296 aa)). Position 41 is a phosphoserine (serine 41). Lysine 78 is subject to N6-methyllysine. Positions 95–301 (TRSNSLRRDS…PQREPQRVSH (207 aa)) are disordered. Serine 104 and serine 148 each carry phosphoserine. Basic and acidic residues predominate over residues 149–164 (GDRRRAGPEKRPKSSR). 2 positions are modified to phosphoserine: serine 167 and serine 181. Phosphothreonine is present on threonine 187. Residues 191–202 (AGLASGAKLAAG) are compositionally biased toward low complexity. Serine 195 is modified (phosphoserine). Threonine 207 carries the post-translational modification Phosphothreonine. The segment covering 242 to 260 (SSSSSSRPPTRARGAPSPG) has biased composition (low complexity). Phosphoserine is present on residues serine 258 and serine 267. A compositionally biased stretch (pro residues) spans 271–290 (LAPPACTPAAPAVPGPPGPR). Serine 291 bears the Phosphoserine mark. Positions 292–301 (PQREPQRVSH) are enriched in basic and acidic residues. The tract at residues 298-323 (RVSHEQFRAALQLVVDPGDPRSYLDN) is GEF-interaction domain (GID). Residues 321-572 (LDNFIKIGEG…AAELLKHPFL (252 aa)) enclose the Protein kinase domain. ATP contacts are provided by residues 327 to 335 (IGEGSTGIV), lysine 350, and 396 to 398 (EFL). Aspartate 440 (proton acceptor) is an active-site residue. Residue 458-460 (DFG) participates in ATP binding. Serine 474 carries the phosphoserine; by autocatalysis modification.

The protein belongs to the protein kinase superfamily. STE Ser/Thr protein kinase family. STE20 subfamily. Interacts with FGFR2 and GRB2. Interacts tightly with GTP-bound but not GDP-bound CDC42/p21 and weakly with RAC1. Interacts with INKA1. Interacts with SH3RF2. Interacts with RHOU and PAXI; the PAK4-RHOU complex protects RHOU from ubiquitination and acts as a scaffold to suppport paxillin/PAXI phosphorylation. Post-translationally, autophosphorylated on serine residues when activated by CDC42/p21. Phosphorylated on tyrosine residues upon stimulation of FGFR2. Methylated by SETD6. Polyubiquitinated, leading to its proteasomal degradation. In terms of tissue distribution, highest expression in prostate, testis and colon.

It is found in the cytoplasm. It catalyses the reaction L-seryl-[protein] + ATP = O-phospho-L-seryl-[protein] + ADP + H(+). The enzyme catalyses L-threonyl-[protein] + ATP = O-phospho-L-threonyl-[protein] + ADP + H(+). With respect to regulation, inhibited by INKA1; which inhibits the serine/threonine-protein kinase activity by binding PAK4 in a substrate-like manner. Serine/threonine-protein kinase that plays a role in a variety of different signaling pathways including cytoskeleton regulation, cell adhesion turnover, cell migration, growth, proliferation or cell survival. Activation by various effectors including growth factor receptors or active CDC42 and RAC1 results in a conformational change and a subsequent autophosphorylation on several serine and/or threonine residues. Phosphorylates and inactivates the protein phosphatase SSH1, leading to increased inhibitory phosphorylation of the actin binding/depolymerizing factor cofilin. Decreased cofilin activity may lead to stabilization of actin filaments. Phosphorylates LIMK1, a kinase that also inhibits the activity of cofilin. Phosphorylates integrin beta5/ITGB5 and thus regulates cell motility. Phosphorylates ARHGEF2 and activates the downstream target RHOA that plays a role in the regulation of assembly of focal adhesions and actin stress fibers. Stimulates cell survival by phosphorylating the BCL2 antagonist of cell death BAD. Alternatively, inhibits apoptosis by preventing caspase-8 binding to death domain receptors in a kinase independent manner. Plays a role in cell-cycle progression by controlling levels of the cell-cycle regulatory protein CDKN1A and by phosphorylating RAN. Promotes kinase-independent stabilization of RHOU, thereby contributing to focal adhesion disassembly during cell migration. This chain is Serine/threonine-protein kinase PAK 4, found in Homo sapiens (Human).